The following is a 111-amino-acid chain: Microtubule nucleation factor SSNA1 (111 aa).

The stretch at 6–71 (QALQNHNNEL…ARKTETKNEY (66 aa)) forms a coiled coil.

Belongs to the SSNA1 family. In terms of assembly, self-assembles into fibrils in a head-to-tail fashion.

It localises to the cytoplasm. The protein localises to the cytoskeleton. The protein resides in the flagellum basal body. Its subcellular location is the flagellum axoneme. Microtubule-binding protein which stabilizes dynamic microtubules by slowing growth and shrinkage at both plus and minus ends and serves as a sensor of microtubule damage. Induces microtubule branching which is mediated by the formation of long SSNA1 fibrils which guide microtubule protofilaments to split apart from the mother microtubule and form daughter microtubules. Required for cell division. This chain is Microtubule nucleation factor SSNA1, found in Chlamydomonas reinhardtii (Chlamydomonas smithii).